The sequence spans 59 residues: MANTVKVTQTRSSIGRLPKHKATLRGLGLRRIGHTVELEDTPCVRGMINQVYYMVKVEG.

This sequence belongs to the universal ribosomal protein uL30 family. As to quaternary structure, part of the 50S ribosomal subunit.

This is Large ribosomal subunit protein uL30 from Aeromonas hydrophila subsp. hydrophila (strain ATCC 7966 / DSM 30187 / BCRC 13018 / CCUG 14551 / JCM 1027 / KCTC 2358 / NCIMB 9240 / NCTC 8049).